A 79-amino-acid polypeptide reads, in one-letter code: Sec-independent protein translocase protein TatA (79 aa).

A helical membrane pass occupies residues 1–21; sequence MGGFTSIWHWVIVLLVIVLLF. The tract at residues 48 to 79 is disordered; sequence EEEAKNEPKTLDAQVAQTKVHETSEIKSKQES. The span at 66–79 shows a compositional bias: basic and acidic residues; the sequence is KVHETSEIKSKQES.

The protein belongs to the TatA/E family. In terms of assembly, the Tat system comprises two distinct complexes: a TatABC complex, containing multiple copies of TatA, TatB and TatC subunits, and a separate TatA complex, containing only TatA subunits. Substrates initially bind to the TatABC complex, which probably triggers association of the separate TatA complex to form the active translocon.

The protein localises to the cell inner membrane. Its function is as follows. Part of the twin-arginine translocation (Tat) system that transports large folded proteins containing a characteristic twin-arginine motif in their signal peptide across membranes. TatA could form the protein-conducting channel of the Tat system. In Helicobacter pylori (strain Shi470), this protein is Sec-independent protein translocase protein TatA.